We begin with the raw amino-acid sequence, 147 residues long: Hemoglobin subunit deltaH (147 aa).

A Globin domain is found at 3–147 (RLTDSEKAEV…MANALAHKYH (145 aa)). Heme b contacts are provided by His64 and His93.

This sequence belongs to the globin family. Heterotetramer of two delta chains and two alpha chains. In terms of tissue distribution, red blood cells.

In Procavia capensis (Rock hyrax), this protein is Hemoglobin subunit deltaH.